Here is a 155-residue protein sequence, read N- to C-terminus: Small ribosomal subunit protein uS15 (155 aa).

Residues 1–10 (MARMHTRRRG) are compositionally biased toward basic residues. The tract at residues 1–66 (MARMHTRRRG…EGVQGTPVPD (66 aa)) is disordered. The segment covering 21 to 33 (EPPEWSDVDEDAI) has biased composition (acidic residues). The span at 34 to 45 (EERVVELAEQGH) shows a compositional bias: basic and acidic residues.

This sequence belongs to the universal ribosomal protein uS15 family. Part of the 30S ribosomal subunit.

This Halobacterium salinarum (strain ATCC 700922 / JCM 11081 / NRC-1) (Halobacterium halobium) protein is Small ribosomal subunit protein uS15.